Here is a 250-residue protein sequence, read N- to C-terminus: Small ribosomal subunit protein uS3 (250 aa).

The KH type-2 domain occupies 39-107 (VRAALKKRLY…EVHLNIVEIR (69 aa)). The disordered stretch occupies residues 215–250 (LDKRLATESGPAGEGGGRERGDRPDRGDRRDRRDRA). Positions 230 to 250 (GGRERGDRPDRGDRRDRRDRA) are enriched in basic and acidic residues.

It belongs to the universal ribosomal protein uS3 family. Part of the 30S ribosomal subunit. Forms a tight complex with proteins S10 and S14.

Its function is as follows. Binds the lower part of the 30S subunit head. Binds mRNA in the 70S ribosome, positioning it for translation. This is Small ribosomal subunit protein uS3 from Caulobacter vibrioides (strain ATCC 19089 / CIP 103742 / CB 15) (Caulobacter crescentus).